Consider the following 369-residue polypeptide: Aminomethyltransferase (369 aa).

It belongs to the GcvT family. As to quaternary structure, the glycine cleavage system is composed of four proteins: P, T, L and H.

The enzyme catalyses N(6)-[(R)-S(8)-aminomethyldihydrolipoyl]-L-lysyl-[protein] + (6S)-5,6,7,8-tetrahydrofolate = N(6)-[(R)-dihydrolipoyl]-L-lysyl-[protein] + (6R)-5,10-methylene-5,6,7,8-tetrahydrofolate + NH4(+). In terms of biological role, the glycine cleavage system catalyzes the degradation of glycine. This chain is Aminomethyltransferase, found in Xanthomonas oryzae pv. oryzae (strain PXO99A).